Consider the following 770-residue polypeptide: Transducin-like enhancer protein 1 (770 aa).

Positions 1 to 131 (MFPQSRHPTP…IIGQQQLQAQ (131 aa)) are q domain. Disordered stretches follow at residues 128–157 (LQAQHLSHGHGPPVPLTPHPSGLQPPGIPP) and 176–346 (HLAI…PAME). The GP domain stretch occupies residues 132-199 (HLSHGHGPPV…RHRDRESGTS (68 aa)). The span at 146–157 (HPSGLQPPGIPP) shows a compositional bias: low complexity. Basic and acidic residues-rich tracts occupy residues 178-196 (AIKDDKKHHDAERHRDRES) and 209-244 (RSTDKRRNGPEFSSDIKKRKVDDKDNYDSDGDKSDD). Positions 200-266 (NSLLVPDSLR…SPHASPTHSP (67 aa)) are ccN domain. The short motif at 225-228 (KKRK) is the Nuclear localization signal element. S237 carries the post-translational modification Phosphoserine; by CK2. Positions 255-264 (PSSPHASPTH) are enriched in low complexity. S257, S261, and S265 each carry phosphoserine; by CDK1. The span at 265–281 (SPRENGIDKNRLLKKDA) shows a compositional bias: basic and acidic residues. The SP domain stretch occupies residues 267–450 (RENGIDKNRL…GGKPAYSFHV (184 aa)). Positions 282 to 297 (SGSPASTASSGSSSSL) are enriched in low complexity. Phosphoserine is present on S284. The segment covering 298–308 (KSKEVSLHEKA) has biased composition (basic and acidic residues). WD repeat units follow at residues 470-501 (GIPRHARQINTLNHGEVVCAVTISNPTRHVYT), 528-558 (NRDNYIRSCKLLPDGCTLIVGGEASTLSIWD), 572-602 (SSAPACYALAISPDSKVCFSCCSDGNIAVWD), 614-644 (GHTDGASCIDISNDGTKLWTGGLDNTVRSWD), 696-726 (LHESCVLSLKFAYCGKWFVSTGKDNLLNAWR), and 737-767 (KESSSVLSCDISVDDKYIVTGSGDKKATVYE).

The protein belongs to the WD repeat Groucho/TLE family. In terms of assembly, homooligomer and heterooligomer with other family members. Binds RUNX1, RUNX3, FOXA2, KDM6A, UTY, histone H3, HESX1, ESRRG and the NF-kappa-B subunit RELA. Interacts with HES1 (via WRPW motif). Binds TCF7, LEF1, TCF7L1 and TCF7L2. Interacts with SIX3. Interacts with EFNB1. Interacts with TLE4. Interacts with FOXG1/BF-1; the interaction is inhibited by TLE6/GRG6. In terms of processing, phosphorylated, probably by CDK1. The degree of phosphorylation varies throughout the cell cycle, and is highest at the G2/M transition. Becomes hyperphosphorylated in response to cell differentiation and interaction with HES1 or RUNX1. Ubiquitinated by XIAP/BIRC4. Highly expressed in liver and lung. Detected at slightly lower levels in heart, brain, kidney and testis. Detected in fetal and adult stomach and small intestine, in adult ileum, duodenum and colon. Expressed in bone marrow-derived macrophages. As to expression, most abundant at the base of the crypts of Lieberkuhn in the small intestine.

Its subcellular location is the nucleus. It localises to the cytoplasm. Its function is as follows. Transcriptional corepressor that binds to a number of transcription factors. Inhibits NF-kappa-B-regulated gene expression. Inhibits the transcriptional activation mediated by FOXA2, and by CTNNB1 and TCF family members in Wnt signaling. Enhances FOXG1/BF-1- and HES1-mediated transcriptional repression. The effects of full-length TLE family members may be modulated by association with dominant-negative AES. Unusual function as coactivator for ESRRG. The sequence is that of Transducin-like enhancer protein 1 (Tle1) from Mus musculus (Mouse).